Consider the following 170-residue polypeptide: Lipoprotein signal peptidase (170 aa).

The next 5 helical transmembrane spans lie at I13–V33, L72–E92, V96–I113, L116–L136, and F142–F162. Catalysis depends on residues D124 and D146.

This sequence belongs to the peptidase A8 family.

The protein localises to the cell inner membrane. The catalysed reaction is Release of signal peptides from bacterial membrane prolipoproteins. Hydrolyzes -Xaa-Yaa-Zaa-|-(S,diacylglyceryl)Cys-, in which Xaa is hydrophobic (preferably Leu), and Yaa (Ala or Ser) and Zaa (Gly or Ala) have small, neutral side chains.. The protein operates within protein modification; lipoprotein biosynthesis (signal peptide cleavage). Its function is as follows. This protein specifically catalyzes the removal of signal peptides from prolipoproteins. The chain is Lipoprotein signal peptidase from Borrelia duttonii (strain Ly).